The chain runs to 520 residues: MAEISHPPMEQLQDLEYCIDSNPPWPETVLLAFQNYILMLGTSAFIPALLVPAMGGSDGDRARVIQTLLFVAGIKTLLQALFGTRLPAVVGGSLAYVVPIAYIINDSSLQKISNDHERFIHTMRAIQGALIVASSIQIILGYSQVWGLFSRFFSPLGMAPVVGLVGLGMFQRGFPQLGNCIEIGLPMLLLVIGLTQYLKHVRPFKDVPIFERFPILICVTIVWIYAVILTASGAYRGKPSLTQHSCRTDKANLISTAPWFKFPYPLQWGPPTFSVGHSFAMMSAVLVSMVESTGAYIAASRLAIATPPPAYVLSRGIGWQGIGVLLDGLFGTGTGSTVLVENVGLLGLTRVGSRRVVQVSAGFMIVFSTLGKFGAVFASIPVPIYAALHCILFGLVAAVGLSFLQFTNMNSMRNLMITGLSLFLGISIPQFFAQYWDARHYGLVHTNAGWFNAFLNTLFMSPATVGLIIAVFMDNTMEVERSKKDRGMPWWVKFRTFRGDNRNEEFYTLPFNLNRFFPPT.

Transmembrane regions (helical) follow at residues 36–56, 64–84, 86–106, 129–149, 150–170, 174–194, 213–233, 279–299, 362–382, 384–404, 415–435, and 453–473; these read YILMLGTSAFIPALLVPAMGG, VIQTLLFVAGIKTLLQALFGT, LPAVVGGSLAYVVPIAYIIND, ALIVASSIQIILGYSQVWGLF, SRFFSPLGMAPVVGLVGLGMF, FPQLGNCIEIGLPMLLLVIGL, FPILICVTIVWIYAVILTASG, FAMMSAVLVSMVESTGAYIAA, GFMIVFSTLGKFGAVFASIPV, IYAALHCILFGLVAAVGLSFL, LMITGLSLFLGISIPQFFAQY, and AFLNTLFMSPATVGLIIAVFM.

It belongs to the nucleobase:cation symporter-2 (NCS2) (TC 2.A.40) family. As to expression, expressed in cotyledons 4 days after imbibition (DAI). Expressed in the minor and major veins of cotyledons and leaves, in the shoot apex and pedicels. Expressed in the root meristems, root tips and lateral root primordia.

The protein resides in the membrane. The chain is Nucleobase-ascorbate transporter 1 (NAT1) from Arabidopsis thaliana (Mouse-ear cress).